An 858-amino-acid polypeptide reads, in one-letter code: Bifunctional uridylyltransferase/uridylyl-removing enzyme (858 aa).

The uridylyltransferase stretch occupies residues 1–324 (MSASVAEPPP…PATSGVTRVL (324 aa)). The interval 325–681 (SPGRFVEKQG…ARPSPVGDAL (357 aa)) is uridylyl-removing. In terms of domain architecture, HD spans 443–565 (VDQHILMVLR…VGSERRLTAL (123 aa)). ACT domains are found at residues 682–761 (QVLV…PEPS) and 790–858 (ILSV…AIAV).

The protein belongs to the GlnD family. Mg(2+) serves as cofactor.

The catalysed reaction is [protein-PII]-L-tyrosine + UTP = [protein-PII]-uridylyl-L-tyrosine + diphosphate. It catalyses the reaction [protein-PII]-uridylyl-L-tyrosine + H2O = [protein-PII]-L-tyrosine + UMP + H(+). Uridylyltransferase (UTase) activity is inhibited by glutamine, while glutamine activates uridylyl-removing (UR) activity. In terms of biological role, modifies, by uridylylation and deuridylylation, the PII regulatory proteins (GlnB and homologs), in response to the nitrogen status of the cell that GlnD senses through the glutamine level. Under low glutamine levels, catalyzes the conversion of the PII proteins and UTP to PII-UMP and PPi, while under higher glutamine levels, GlnD hydrolyzes PII-UMP to PII and UMP (deuridylylation). Thus, controls uridylylation state and activity of the PII proteins, and plays an important role in the regulation of nitrogen assimilation and metabolism. This is Bifunctional uridylyltransferase/uridylyl-removing enzyme from Burkholderia mallei (strain ATCC 23344).